The following is a 243-amino-acid chain: uncharacterized protein (243 aa).

Residues C120 and C157 each contribute to the [4Fe-4S] cluster site.

In terms of assembly, homodimer. The cofactor is [4Fe-4S] cluster.

This is an uncharacterized protein from Methanocaldococcus jannaschii (strain ATCC 43067 / DSM 2661 / JAL-1 / JCM 10045 / NBRC 100440) (Methanococcus jannaschii).